We begin with the raw amino-acid sequence, 850 residues long: Mitogen-activated protein kinase kinase kinase 11 (850 aa).

At Ser-11 the chain carries Phosphoserine. Gly residues predominate over residues Gly-18–Arg-31. The interval Gly-18–Lys-37 is disordered. A Phosphoserine modification is found at Ser-35. Positions Tyr-42–Gly-106 constitute an SH3 domain. A Protein kinase domain is found at Leu-118 to Leu-380. ATP-binding positions include Ile-124–Val-132 and Lys-145. The Proton acceptor role is filled by Asp-242. Thr-278 is modified (phosphothreonine; by autocatalysis). At Ser-282 the chain carries Phosphoserine; by autocatalysis and MAP4K1. Position 395 is a phosphoserine (Ser-395). 2 leucine-zipper regions span residues Ile-404 to Leu-425 and Leu-439 to Leu-460. Phosphoserine occurs at positions 508, 525, 549, 556, and 557. The tract at residues Leu-536–Pro-850 is disordered. Positions Arg-551–Ala-563 are enriched in basic and acidic residues. Residues Ser-598–Leu-610 are compositionally biased toward low complexity. At Ser-655 the chain carries Phosphoserine. Positions Thr-677–Pro-693 are enriched in pro residues. At Thr-712 the chain carries Phosphothreonine. A phosphoserine mark is found at Ser-728, Ser-731, Ser-743, Ser-751, Ser-761, Ser-773, Ser-792, Ser-796, and Ser-818. The span at Arg-790 to Arg-802 shows a compositional bias: pro residues. The span at Arg-803–Pro-819 shows a compositional bias: low complexity.

This sequence belongs to the protein kinase superfamily. STE Ser/Thr protein kinase family. MAP kinase kinase kinase subfamily. Homodimer; undergoes dimerization during activation. Interacts with MAP2K4/MKK4. Interacts with MAP2K7/MKK7. Found in a complex with SH3RF1, RAC1, MAP2K7/MKK7, MAPK8IP1/JIP1 and MAPK8/JNK1. Mg(2+) serves as cofactor. Autophosphorylation on serine and threonine residues within the activation loop plays a role in enzyme activation. Thr-278 is likely to be the main autophosphorylation site. Phosphorylation of Ser-556 and Ser-557 is induced by CDC42.

The protein resides in the cytoplasm. Its subcellular location is the cytoskeleton. It is found in the microtubule organizing center. The protein localises to the centrosome. The catalysed reaction is L-seryl-[protein] + ATP = O-phospho-L-seryl-[protein] + ADP + H(+). It carries out the reaction L-threonyl-[protein] + ATP = O-phospho-L-threonyl-[protein] + ADP + H(+). Its activity is regulated as follows. Homodimerization via the leucine zipper domains is required for autophosphorylation and subsequent activation. Its function is as follows. Activates the JUN N-terminal pathway. Required for serum-stimulated cell proliferation and for mitogen and cytokine activation of MAPK14 (p38), MAPK3 (ERK) and MAPK8 (JNK1) through phosphorylation and activation of MAP2K4/MKK4 and MAP2K7/MKK7. Plays a role in mitogen-stimulated phosphorylation and activation of BRAF, but does not phosphorylate BRAF directly. Influences microtubule organization during the cell cycle. The sequence is that of Mitogen-activated protein kinase kinase kinase 11 (Map3k11) from Rattus norvegicus (Rat).